Here is a 342-residue protein sequence, read N- to C-terminus: S-adenosylmethionine:tRNA ribosyltransferase-isomerase (342 aa).

This sequence belongs to the QueA family. In terms of assembly, monomer.

The protein resides in the cytoplasm. The catalysed reaction is 7-aminomethyl-7-carbaguanosine(34) in tRNA + S-adenosyl-L-methionine = epoxyqueuosine(34) in tRNA + adenine + L-methionine + 2 H(+). Its pathway is tRNA modification; tRNA-queuosine biosynthesis. Its function is as follows. Transfers and isomerizes the ribose moiety from AdoMet to the 7-aminomethyl group of 7-deazaguanine (preQ1-tRNA) to give epoxyqueuosine (oQ-tRNA). In Geobacillus sp. (strain WCH70), this protein is S-adenosylmethionine:tRNA ribosyltransferase-isomerase.